Here is an 836-residue protein sequence, read N- to C-terminus: Protein translocase subunit SecA (836 aa).

Residues Gln-85, 103-107, and Asp-492 contribute to the ATP site; that span reads GEGKT. Zn(2+) contacts are provided by Cys-820, Cys-822, Cys-831, and Cys-832.

This sequence belongs to the SecA family. In terms of assembly, monomer and homodimer. Part of the essential Sec protein translocation apparatus which comprises SecA, SecYEG and auxiliary proteins SecDF. Other proteins may also be involved. Requires Zn(2+) as cofactor.

Its subcellular location is the cell membrane. The protein localises to the cytoplasm. The enzyme catalyses ATP + H2O + cellular proteinSide 1 = ADP + phosphate + cellular proteinSide 2.. In terms of biological role, part of the Sec protein translocase complex. Interacts with the SecYEG preprotein conducting channel. Has a central role in coupling the hydrolysis of ATP to the transfer of proteins into and across the cell membrane, serving as an ATP-driven molecular motor driving the stepwise translocation of polypeptide chains across the membrane. The chain is Protein translocase subunit SecA from Clostridium botulinum (strain Eklund 17B / Type B).